We begin with the raw amino-acid sequence, 411 residues long: ATP-dependent Clp protease ATP-binding subunit ClpX (411 aa).

The ClpX-type ZB domain occupies 1-49; it reads MSDKNIRCSFCGRTQKEVKKLIAGPGVYICDECVKLAYDIIEEEDSEEI. Zn(2+) contacts are provided by cysteine 8, cysteine 11, cysteine 30, and cysteine 33. An ATP-binding site is contributed by 115 to 122; it reads PTGVGKTL.

This sequence belongs to the ClpX chaperone family. As to quaternary structure, component of the ClpX-ClpP complex. Forms a hexameric ring that, in the presence of ATP, binds to fourteen ClpP subunits assembled into a disk-like structure with a central cavity, resembling the structure of eukaryotic proteasomes.

In terms of biological role, ATP-dependent specificity component of the Clp protease. It directs the protease to specific substrates. Can perform chaperone functions in the absence of ClpP. In Dictyoglomus turgidum (strain DSM 6724 / Z-1310), this protein is ATP-dependent Clp protease ATP-binding subunit ClpX.